Consider the following 118-residue polypeptide: Large ribosomal subunit protein uL22c (118 aa).

It belongs to the universal ribosomal protein uL22 family. Part of the 50S ribosomal subunit.

It localises to the plastid. Its subcellular location is the organellar chromatophore. This protein binds specifically to 23S rRNA. In terms of biological role, the globular domain of the protein is located near the polypeptide exit tunnel on the outside of the subunit, while an extended beta-hairpin is found that lines the wall of the exit tunnel in the center of the 70S ribosome. The protein is Large ribosomal subunit protein uL22c (rpl22) of Paulinella chromatophora.